Reading from the N-terminus, the 152-residue chain is Small ribosomal subunit protein uS13 (152 aa).

Residue S41 is modified to Phosphoserine.

The protein belongs to the universal ribosomal protein uS13 family.

The protein resides in the cytoplasm. Its function is as follows. Located at the top of the head of the 40S subunit, it contacts several helices of the 18S rRNA. This is Small ribosomal subunit protein uS13 (RpS18) from Drosophila melanogaster (Fruit fly).